Here is a 229-residue protein sequence, read N- to C-terminus: Enolase-phosphatase E1 (229 aa).

It belongs to the HAD-like hydrolase superfamily. MasA/MtnC family. Monomer. Mg(2+) is required as a cofactor.

The enzyme catalyses 5-methylsulfanyl-2,3-dioxopentyl phosphate + H2O = 1,2-dihydroxy-5-(methylsulfanyl)pent-1-en-3-one + phosphate. It functions in the pathway amino-acid biosynthesis; L-methionine biosynthesis via salvage pathway; L-methionine from S-methyl-5-thio-alpha-D-ribose 1-phosphate: step 3/6. Its pathway is amino-acid biosynthesis; L-methionine biosynthesis via salvage pathway; L-methionine from S-methyl-5-thio-alpha-D-ribose 1-phosphate: step 4/6. Bifunctional enzyme that catalyzes the enolization of 2,3-diketo-5-methylthiopentyl-1-phosphate (DK-MTP-1-P) into the intermediate 2-hydroxy-3-keto-5-methylthiopentenyl-1-phosphate (HK-MTPenyl-1-P), which is then dephosphorylated to form the acireductone 1,2-dihydroxy-3-keto-5-methylthiopentene (DHK-MTPene). The protein is Enolase-phosphatase E1 of Yersinia enterocolitica serotype O:8 / biotype 1B (strain NCTC 13174 / 8081).